Here is a 219-residue protein sequence, read N- to C-terminus: Transmembrane emp24 domain-containing protein 10 (219 aa).

Positions 1–31 (MSGLFGPLSRPGPLPSAWLFLLLLGPSSVLG) are cleaved as a signal peptide. Positions 1–142 (MSGLFGPLSR…KNYEEIAKVE (142 aa)) are required for interaction with STX17. Topologically, residues 32-185 (ISFHLPVNSR…RDTNESTNTR (154 aa)) are lumenal. One can recognise a GOLD domain in the interval 41–193 (RKCLREEIHK…TRVLYFSIFS (153 aa)). Residues 147–178 (LEVELRRLEDLSESIVNDFAYMKKREEEMRDT) form a required for TMED10 and TMED2 cis-Golgi network localization region. A dimethylated arginine mark is found at Arg-171 and Arg-176. Residue Asn-179 is glycosylated (N-linked (GlcNAc...) asparagine). Residues 186–206 (VLYFSIFSMFCLIGLATWQVF) traverse the membrane as a helical segment. Positions 204–219 (QVFYLRRFFKAKKLIE) are interaction with COPG1. At 207–219 (YLRRFFKAKKLIE) the chain is on the cytoplasmic side. The tract at residues 207–219 (YLRRFFKAKKLIE) is interaction with ARF1 and IL1B. Positions 211–212 (FF) match the COPII vesicle coat-binding motif. The COPI vesicle coat-binding motif lies at 211–219 (FFKAKKLIE).

It belongs to the EMP24/GP25L family. Predominantly dimeric and to a lesser extent monomeric in the ER. Monomer and dimer in ERGIC and cis-Golgi network. Forms homooligomer (via GOLD domain); the assembly is promoted by direct binding with leaderless cargos and may form a protein channel that facilitates cargo entry into the ERGIC. Forms heterooligomeric complexes with other members of the p24 family such as TMED2, TMED7 and TMED9. Interacts (via GOLD domain) with TMED2 (via GOLD domain); the complex is required for export of TMED10 from the ER to the cis-Golgi network; the complex is proposed to be involved in cis-Golgi network dynamics and / or biogenesis. Associates with the COPI vesicle coat subunits (coatomer). Tetramerization of the cytoplasmic domain at the Golgi membrane in vitro; the complex is proposed to interact with COPI coatomer and induce budding of the vesicles. Interacts with COPG1; the interaction involves TMED10 homodimer. Interacts with ARF1 (GDP-bound); the interaction probably involves a TMED10 oligomer. Interacts with SEC23A, SEC24B, SEC24C and SEC24D components of the coat protein complex II/COPII, indicative of an association of TMED10 with the COPII vesicle coat. Interacts with CD59. Interacts with MPPE1/PGAP5; the complex might recruit and sort GPI-anchored proteins to the ER-exit site, or the interaction might lead to recycling of PGAP5 between the ER and the Golgi. Interacts with F2LR1/PAR2. Interacts with KDELR2/ERD2; the interaction is disrupted by KDELR2 ligand. Found in a complex composed at least of SURF4, TMED2 and TMED10. Associates with the presenilin-dependent gamma-secretase complex. Interacts with STX17; the interaction is direct. Interacts with IL-1; the interaction is direct. Interacts with RAB21 (active GTP-bound form); the interaction is indirect and regulates TMED10 abundance and localization at the Golgi.

Its subcellular location is the endoplasmic reticulum membrane. It localises to the endoplasmic reticulum-Golgi intermediate compartment membrane. The protein resides in the golgi apparatus membrane. It is found in the golgi apparatus. The protein localises to the cis-Golgi network membrane. Its subcellular location is the trans-Golgi network membrane. It localises to the cytoplasmic vesicle. The protein resides in the secretory vesicle membrane. It is found in the cell membrane. The protein localises to the melanosome. In terms of biological role, cargo receptor involved in protein vesicular trafficking and quality control in the endoplasmic reticulum (ER) and Golgi. The p24 protein family is a group of transmembrane proteins that bind coat protein complex I/COPI and coat protein complex II/COPII involved in vesicular trafficking between the membranes. Acts at the lumenal side for incorporation of secretory cargo molecules into transport vesicles and involved in vesicle coat formation at the cytoplasmic side. Mainly functions in the early secretory pathway and cycles between the ER, ER-Golgi intermediate compartment (ERGIC) and Golgi, mediating cargo transport through COPI and COPII-coated vesicles. In COPII vesicle-mediated anterograde transport, involved in the transport of GPI-anchored proteins by acting together with TMED2 as their cargo receptor; the function specifically implies SEC24C and SEC24D of the COPII vesicle coat and lipid raft-like microdomains of the ER. Recognizes GPI anchors structural remodeled in the ER by the GPI inositol-deacylase/PGAP1 and the metallophosphoesterase MPPE1/PGAP5. In COPI vesicle-mediated retrograde transport, involved in the biogenesis of COPI vesicles and vesicle coat recruitment. Involved in trafficking of amyloid beta A4 protein and soluble APP-beta release (independent from the modulation of gamma-secretase activity). Involved in the KDELR2-mediated retrograde transport of the toxin A subunit (CTX-A-K63)together with COPI and the COOH terminus of KDELR2. On Golgi membranes, acts as a primary receptor for ARF1-GDP, a GTP-binding protein involved in COPI-vesicle formation. Increases coatomer-dependent GTPase-activating activity of ARFGAP2 which mediates the hydrolysis of ARF1-bound GTP and therefore modulates protein trafficking from the Golgi apparatus. Involved in the exocytic trafficking of G protein-coupled receptors F2LR1/PAR2 (trypsin and tryspin-like enzyme receptor), OPRM1 (opioid receptor) and P2RY4 (UTD and UDP receptor) from the Golgi to the plasma membrane, thus contributing to receptor resensitization. In addition to its cargo receptor activity, may also act as a protein channel after oligomerization, facilitating the post-translational entry of leaderless cytoplasmic cargo into the ERGIC. Involved in the translocation into ERGIC, the vesicle entry and the secretion of leaderless cargos (lacking the secretion signal sequence), including the mature form of interleukin 1/IL-1 family members, the alpha-crystallin B chain HSPB5, the carbohydrate-binding proteins galectin-1/LGALS1 and galectin-3/LGALS3, the microtubule-associated protein Tau/MAPT, and the annexin A1/ANXA1; the translocation process is dependent on cargo protein unfolding and enhanced by chaperones HSP90AB1 and HSP90B1/GRP9. Could also associates with the presenilin-dependent gamma-secretase complex in order to regulate gamma-cleavages of the amyloid beta A4 protein to yield amyloid-beta 40/Abeta40. The sequence is that of Transmembrane emp24 domain-containing protein 10 from Mus musculus (Mouse).